Reading from the N-terminus, the 438-residue chain is Chromosomal replication initiator protein DnaA (438 aa).

The segment at 1–71 (MTTKEFLTII…CFEIYDGSKP (71 aa)) is domain I, interacts with DnaA modulators. The domain II stretch occupies residues 71-100 (PTIEIKLSNEKKSKKEILKEQTQNESTEST). Residues 101 to 315 (ILNPSYTFDS…GVLIRINASA (215 aa)) are domain III, AAA+ region. ATP is bound by residues Gly145, Gly147, Lys148, and Thr149. The interval 316-438 (SLLNQEITLP…LKNKIINSRE (123 aa)) is domain IV, binds dsDNA.

This sequence belongs to the DnaA family. Oligomerizes as a right-handed, spiral filament on DNA at oriC.

The protein localises to the cytoplasm. Plays an essential role in the initiation and regulation of chromosomal replication. ATP-DnaA binds to the origin of replication (oriC) to initiate formation of the DNA replication initiation complex once per cell cycle. Binds the DnaA box (a 9 base pair repeat at the origin) and separates the double-stranded (ds)DNA. Forms a right-handed helical filament on oriC DNA; dsDNA binds to the exterior of the filament while single-stranded (ss)DNA is stabiized in the filament's interior. The ATP-DnaA-oriC complex binds and stabilizes one strand of the AT-rich DNA unwinding element (DUE), permitting loading of DNA polymerase. After initiation quickly degrades to an ADP-DnaA complex that is not apt for DNA replication. Binds acidic phospholipids. The sequence is that of Chromosomal replication initiator protein DnaA from Aliarcobacter butzleri (strain RM4018) (Arcobacter butzleri).